A 243-amino-acid polypeptide reads, in one-letter code: tRNA (guanine-N(1)-)-methyltransferase (243 aa).

Residues Gly108 and 127-132 (LGDYVL) each bind S-adenosyl-L-methionine.

The protein belongs to the RNA methyltransferase TrmD family. As to quaternary structure, homodimer.

Its subcellular location is the cytoplasm. The catalysed reaction is guanosine(37) in tRNA + S-adenosyl-L-methionine = N(1)-methylguanosine(37) in tRNA + S-adenosyl-L-homocysteine + H(+). Its function is as follows. Specifically methylates guanosine-37 in various tRNAs. This is tRNA (guanine-N(1)-)-methyltransferase from Streptococcus gordonii (strain Challis / ATCC 35105 / BCRC 15272 / CH1 / DL1 / V288).